A 285-amino-acid chain; its full sequence is Polyamine aminopropyltransferase (285 aa).

A PABS domain is found at aspartate 5 to lysine 241. S-methyl-5'-thioadenosine is bound at residue glutamine 35. Residues histidine 66 and aspartate 90 each contribute to the spermidine site. Residues aspartate 110 and aspartate 141–glycine 142 each bind S-methyl-5'-thioadenosine. Aspartate 160 (proton acceptor) is an active-site residue. Aspartate 160–aspartate 163 lines the spermidine pocket. Proline 167 lines the S-methyl-5'-thioadenosine pocket.

The protein belongs to the spermidine/spermine synthase family. In terms of assembly, homodimer or homotetramer.

Its subcellular location is the cytoplasm. The catalysed reaction is S-adenosyl 3-(methylsulfanyl)propylamine + putrescine = S-methyl-5'-thioadenosine + spermidine + H(+). It participates in amine and polyamine biosynthesis; spermidine biosynthesis; spermidine from putrescine: step 1/1. Its function is as follows. Catalyzes the irreversible transfer of a propylamine group from the amino donor S-adenosylmethioninamine (decarboxy-AdoMet) to putrescine (1,4-diaminobutane) to yield spermidine. The chain is Polyamine aminopropyltransferase from Xanthomonas oryzae pv. oryzae (strain MAFF 311018).